A 197-amino-acid polypeptide reads, in one-letter code: Ion-translocating oxidoreductase complex subunit B (197 aa).

The segment at 1–26 is hydrophobic; the sequence is MSTILIAIIALAALAAVFGAILGFAS. The region spanning 32-90 is the 4Fe-4S domain; the sequence is EADPIVDQIDSILPQTQCGQCGYPGCRPYAEAIANGDQINKCPPGGQATIEKLADLMGV. Residues C49, C52, C57, C73, C114, C117, C120, C124, C144, C147, C150, and C154 each coordinate [4Fe-4S] cluster. 2 consecutive 4Fe-4S ferredoxin-type domains span residues 105–134 and 135–164; these read TVAF…GGTK and ALHT…MIPV.

It belongs to the 4Fe4S bacterial-type ferredoxin family. RnfB subfamily. As to quaternary structure, the complex is composed of six subunits: RnfA, RnfB, RnfC, RnfD, RnfE and RnfG. [4Fe-4S] cluster serves as cofactor.

It is found in the cell inner membrane. Functionally, part of a membrane-bound complex that couples electron transfer with translocation of ions across the membrane. This Vibrio campbellii (strain ATCC BAA-1116) protein is Ion-translocating oxidoreductase complex subunit B.